Reading from the N-terminus, the 122-residue chain is Large ribosomal subunit protein uL18 (122 aa).

Residues 1-26 (MSNLSRKQQTQKRHRRLRRHLKGTAQ) are disordered. Positions 9 to 22 (QTQKRHRRLRRHLK) are enriched in basic residues.

The protein belongs to the universal ribosomal protein uL18 family. Part of the 50S ribosomal subunit; part of the 5S rRNA/L5/L18/L25 subcomplex. Contacts the 5S and 23S rRNAs.

Its function is as follows. This is one of the proteins that bind and probably mediate the attachment of the 5S RNA into the large ribosomal subunit, where it forms part of the central protuberance. The chain is Large ribosomal subunit protein uL18 from Prochlorococcus marinus (strain MIT 9313).